The primary structure comprises 873 residues: Bifunctional heparan sulfate N-deacetylase/N-sulfotransferase 3 (873 aa).

The Cytoplasmic segment spans residues 1–13; the sequence is MSFIMKPHRHFQR. Residues 14 to 34 traverse the membrane as a helical; Signal-anchor for type II membrane protein segment; the sequence is TLILLATFCMVSIIISAYYLY. The Lumenal segment spans residues 35 to 873; sequence SGYKQESEVS…WLRQELQKVR (839 aa). The tract at residues 36–589 is heparan sulfate N-deacetylase 3; the sequence is GYKQESEVSG…KRHRDIWSKE (554 aa). 4 N-linked (GlcNAc...) asparagine glycosylation sites follow: asparagine 146, asparagine 226, asparagine 342, and asparagine 392. The tract at residues 590–873 is heparan sulfate N-sulfotransferase 3; it reads KTCDRLPKFL…WLRQELQKVR (284 aa). The For sulfotransferase activity role is filled by lysine 605. 605-609 is a binding site for 3'-phosphoadenylyl sulfate; the sequence is KTGTT. N-linked (GlcNAc...) asparagine glycosylation occurs at asparagine 658. Serine 703 is a binding site for 3'-phosphoadenylyl sulfate. The N-linked (GlcNAc...) asparagine glycan is linked to asparagine 794. A disulfide bridge connects residues cysteine 809 and cysteine 819. Position 824 to 828 (824 to 828) interacts with 3'-phosphoadenylyl sulfate; it reads KGRKY.

This sequence belongs to the sulfotransferase 1 family. NDST subfamily. In terms of assembly, monomer. As to expression, strongly expressed strongly in brain. Expressed at high level at embryonic day 11 compared to other stages of development. Weakly expressed in adult heart, kidney, muscle, endothelial cells and testis but not in other tissues.

The protein localises to the golgi apparatus membrane. The enzyme catalyses alpha-D-glucosaminyl-[heparan sulfate](n) + 3'-phosphoadenylyl sulfate = N-sulfo-alpha-D-glucosaminyl-[heparan sulfate](n) + adenosine 3',5'-bisphosphate + 2 H(+). It functions in the pathway glycan metabolism; heparan sulfate biosynthesis. The protein operates within glycan metabolism; heparin biosynthesis. Essential bifunctional enzyme that catalyzes both the N-deacetylation and the N-sulfation of glucosamine (GlcNAc) of the glycosaminoglycan in heparan sulfate. Modifies the GlcNAc-GlcA disaccharide repeating sugar backbone to make N-sulfated heparosan, a prerequisite substrate for later modifications in heparin biosynthesis. Has high deacetylase activity but low sulfotransferase activity. This chain is Bifunctional heparan sulfate N-deacetylase/N-sulfotransferase 3 (Ndst3), found in Mus musculus (Mouse).